Reading from the N-terminus, the 369-residue chain is GTPase Obg (369 aa).

Residues 1-159 (MKFIDEAKIE…RELRLELKVL (159 aa)) enclose the Obg domain. Positions 128–148 (IHFKSSTNRAPRQKSEGKEGE) are disordered. The OBG-type G domain maps to 160–333 (ADIGLLGMPN…LVTEIYEYIA (174 aa)). Residues 166–173 (GMPNAGKS), 191–195 (FTTLH), 213–216 (DIPG), 283–286 (NKLD), and 314–316 (SAL) contribute to the GTP site. Mg(2+)-binding residues include Ser173 and Thr193.

This sequence belongs to the TRAFAC class OBG-HflX-like GTPase superfamily. OBG GTPase family. In terms of assembly, monomer. The cofactor is Mg(2+).

It is found in the cytoplasm. An essential GTPase which binds GTP, GDP and possibly (p)ppGpp with moderate affinity, with high nucleotide exchange rates and a fairly low GTP hydrolysis rate. Plays a role in control of the cell cycle, stress response, ribosome biogenesis and in those bacteria that undergo differentiation, in morphogenesis control. This Janthinobacterium sp. (strain Marseille) (Minibacterium massiliensis) protein is GTPase Obg.